The sequence spans 25 residues: Hemocyanin subunit 3 (25 aa).

The protein belongs to the tyrosinase family. Hemocyanin subfamily. As to expression, hemolymph.

Its subcellular location is the secreted. The protein localises to the extracellular space. Its function is as follows. Hemocyanins are copper-containing oxygen carriers occurring freely dissolved in the hemolymph of many mollusks and arthropods. The sequence is that of Hemocyanin subunit 3 from Maja squinado (Mediterranean spider crab).